The following is a 240-amino-acid chain: ATP-dependent dethiobiotin synthetase BioD (240 aa).

Position 15–20 (15–20) interacts with ATP; it reads EIGKTF. T19 serves as a coordination point for Mg(2+). K40 is a catalytic residue. Residues D57, 118–121, and 178–179 each bind ATP; these read EGVG and NR. Mg(2+)-binding residues include D57 and E118.

This sequence belongs to the dethiobiotin synthetase family. In terms of assembly, homodimer. It depends on Mg(2+) as a cofactor.

Its subcellular location is the cytoplasm. It catalyses the reaction (7R,8S)-7,8-diammoniononanoate + CO2 + ATP = (4R,5S)-dethiobiotin + ADP + phosphate + 3 H(+). The protein operates within cofactor biosynthesis; biotin biosynthesis; biotin from 7,8-diaminononanoate: step 1/2. Catalyzes a mechanistically unusual reaction, the ATP-dependent insertion of CO2 between the N7 and N8 nitrogen atoms of 7,8-diaminopelargonic acid (DAPA, also called 7,8-diammoniononanoate) to form a ureido ring. This is ATP-dependent dethiobiotin synthetase BioD from Burkholderia pseudomallei (strain K96243).